The following is a 1785-amino-acid chain: BCL-6 corepressor-like protein 1 (1785 aa).

Disordered regions lie at residues 65–101, 113–137, and 343–368; these read VGSGSNARGADPDGSATEKLGHKSEDKPDDPQPKMDY, VPLSSPGDGLKLPASDSAEASNSRA, and ASTPPAAPAPPSVPMPTPTPSSGPPS. Residues 83–97 show a composition bias toward basic and acidic residues; the sequence is KLGHKSEDKPDDPQP. Residue S496 is modified to Phosphoserine. Composition is skewed to polar residues over residues 527-539 and 586-600; these read PCTSPSGSTTTQP and GTEQQTEGTSVTFSP. 2 disordered regions span residues 527 to 550 and 562 to 646; these read PCTSPSGSTTTQPAPDGVPGPLAD and PTPQ…PMPV. 2 positions are modified to phosphoserine: S599 and S613. A Glycyl lysine isopeptide (Lys-Gly) (interchain with G-Cter in SUMO2) cross-link involves residue K747. Disordered stretches follow at residues 753-781, 876-901, and 937-977; these read IIDQGEPKGTGATCGKKGSQAGAEGQPST, SSSEAVHGLPEGQPRPGGSFVPEQDP, and VQPS…LKLA. 2 positions are modified to phosphoserine: S1029 and S1033. K1092 participates in a covalent cross-link: Glycyl lysine isopeptide (Lys-Gly) (interchain with G-Cter in SUMO2). Disordered regions lie at residues 1107–1293 and 1312–1487; these read PDDV…QGRR and WDTN…PEAR. At S1162 the chain carries Phosphoserine. A compositionally biased stretch (basic residues) spans 1176–1185; the sequence is VRGKHKHRKP. The segment covering 1195–1213 has biased composition (basic and acidic residues); sequence KRADSHEEGSLEKKAKSSF. Residues 1222-1234 are compositionally biased toward polar residues; that stretch reads STRTRSQSGSICS. The span at 1271–1284 shows a compositional bias: basic and acidic residues; sequence TQRDTQYRSHHAQD. Positions 1314–1324 are enriched in acidic residues; that stretch reads TNEEEEEEEEE. The Nuclear localization signal signature appears at 1328–1336; sequence KRKKRRRQK. Residues 1328–1339 are compositionally biased toward basic residues; it reads KRKKRRRQKSRK. The span at 1352-1363 shows a compositional bias: basic and acidic residues; that stretch reads EQRRKGRADLKA. A compositionally biased stretch (polar residues) spans 1440-1449; it reads WSQQKTRSPK. Low complexity predominate over residues 1461–1480; the sequence is TPSKSRSASSEEASESPTAR. S1476 carries the phosphoserine modification. 3 ANK repeats span residues 1529–1558, 1562–1591, and 1595–1623; these read AGYTALHEACSRGWTDILNILLEHGANVNC, DGTRPVHDAVVNDNLETIWLLLSYGADPTL, and SGQTAMKLASSDTMKRFLSDHLSDLQGRA. A PCGF Ub-like fold domain (PUFD); required for the interaction with the KDM2B-SKP1 heterodimeric complex region spans residues 1668-1785; it reads DDFMFELSDK…SEVEFQSCNS (118 aa).

The protein belongs to the BCOR family. Interacts with PCGF1, forming heterodimers. The PCGF1-BCORL1 heterodimeric complex interacts with the KDM2B-SKP1 heterodimeric complex to form a homotetrameric polycomb repression complex 1 (PRC1.1). Interacts with SKP1. Interacts with CTBP1, HDAC4, HDAC5 and HDAC7. Detected in testis and prostate. Detected at lower levels in peripheral blood leukocytes and spleen. Mainly expressed in the spermatogonia and primary spermatocytes.

It is found in the nucleus. Functionally, transcriptional corepressor. May specifically inhibit gene expression when recruited to promoter regions by sequence-specific DNA-binding proteins such as BCL6. This repression may be mediated at least in part by histone deacetylase activities which can associate with this corepressor. In Homo sapiens (Human), this protein is BCL-6 corepressor-like protein 1.